Reading from the N-terminus, the 59-residue chain is Ribosome biogenesis protein Nop10 (59 aa).

Belongs to the NOP10 family.

In terms of biological role, involved in ribosome biogenesis; more specifically in 18S rRNA pseudouridylation and in cleavage of pre-rRNA. The protein is Ribosome biogenesis protein Nop10 of Thermococcus sibiricus (strain DSM 12597 / MM 739).